Reading from the N-terminus, the 337-residue chain is 1-aminocyclopropane-1-carboxylate deaminase (337 aa).

The residue at position 50 (lysine 50) is an N6-(pyridoxal phosphate)lysine. Serine 77 serves as the catalytic Nucleophile.

It belongs to the ACC deaminase/D-cysteine desulfhydrase family. Homotrimer. Pyridoxal 5'-phosphate is required as a cofactor.

It catalyses the reaction 1-aminocyclopropane-1-carboxylate + H2O = 2-oxobutanoate + NH4(+). Catalyzes a cyclopropane ring-opening reaction, the irreversible conversion of 1-aminocyclopropane-1-carboxylate (ACC) to ammonia and alpha-ketobutyrate. Allows growth on ACC as a nitrogen source. This is 1-aminocyclopropane-1-carboxylate deaminase from Rhizobium radiobacter (Agrobacterium tumefaciens).